The chain runs to 429 residues: Ribosomal protein uS12 methylthiotransferase RimO (429 aa).

An MTTase N-terminal domain is found at 2–118 (HNIFLLSLGC…VLRAIGAEYR (117 aa)). Residues Cys11, Cys47, Cys81, Cys142, Cys146, and Cys149 each coordinate [4Fe-4S] cluster. The region spanning 128 to 357 (LTPPHYAFLK…MELQETISQE (230 aa)) is the Radical SAM core domain. Residues 360 to 427 (REFEGNEIVV…PYDLEGEVIG (68 aa)) enclose the TRAM domain.

Belongs to the methylthiotransferase family. RimO subfamily. The cofactor is [4Fe-4S] cluster.

The protein resides in the cytoplasm. It catalyses the reaction L-aspartate(89)-[ribosomal protein uS12]-hydrogen + (sulfur carrier)-SH + AH2 + 2 S-adenosyl-L-methionine = 3-methylsulfanyl-L-aspartate(89)-[ribosomal protein uS12]-hydrogen + (sulfur carrier)-H + 5'-deoxyadenosine + L-methionine + A + S-adenosyl-L-homocysteine + 2 H(+). Catalyzes the methylthiolation of an aspartic acid residue of ribosomal protein uS12. This Chlorobium limicola (strain DSM 245 / NBRC 103803 / 6330) protein is Ribosomal protein uS12 methylthiotransferase RimO.